The following is a 207-amino-acid chain: MDTIITNAFFENKTTIELARDILGMRLVHQTTNGKLSGLIVETEAYLGATDMAAHSFQNLRTKRTEVMFSSPGRIYMYQMHRQVLLNFITMPEGIPEAILIRAIEPEEQAKHLMEQNRGGKTGYELTNGPGKLTQALGLSMQDYGKTLFDSNIWLEEAKTPHLIEATNRIGVPNKGIATHFPLRFTVKGSPYLSAQRKSRILADIWE.

It belongs to the DNA glycosylase MPG family.

The polypeptide is Putative 3-methyladenine DNA glycosylase (Listeria monocytogenes serotype 4a (strain HCC23)).